Here is a 1750-residue protein sequence, read N- to C-terminus: Protein TIC 214 (1750 aa).

6 helical membrane-spanning segments follow: residues 12-32 (KIIN…ALSI), 69-89 (FIMG…YVAL), 97-117 (ILAL…SFFA), 129-149 (LEIY…SCIL), 177-197 (FAWF…LVWI), and 216-236 (IFVI…SIQC). Residues 260–277 (RERLQKEEERGVEKKEQS) are compositionally biased toward basic and acidic residues. 5 disordered regions span residues 260–282 (RERL…EEDP), 617–638 (ATTT…KKES), 718–738 (STDK…KQRE), 1205–1225 (RNSR…PKPV), and 1419–1512 (ETDS…NKKE). Positions 617–629 (ATTTNSKTNTTKD) are enriched in low complexity. Over residues 727–738 (KKEEKRENKQRE) the composition is skewed to basic and acidic residues. A compositionally biased stretch (basic and acidic residues) spans 1420–1512 (TDSKQKSETD…TKSDKKNKKE (93 aa)).

The protein belongs to the TIC214 family. As to quaternary structure, part of the Tic complex.

It is found in the plastid. Its subcellular location is the chloroplast inner membrane. In terms of biological role, involved in protein precursor import into chloroplasts. May be part of an intermediate translocation complex acting as a protein-conducting channel at the inner envelope. The chain is Protein TIC 214 from Cuscuta reflexa (Southern Asian dodder).